The following is a 559-amino-acid chain: Glucose-6-phosphate isomerase (559 aa).

The Proton donor role is filled by E363. Residues H394 and K523 contribute to the active site.

Belongs to the GPI family.

The protein resides in the cytoplasm. It catalyses the reaction alpha-D-glucose 6-phosphate = beta-D-fructose 6-phosphate. The protein operates within carbohydrate biosynthesis; gluconeogenesis. It functions in the pathway carbohydrate degradation; glycolysis; D-glyceraldehyde 3-phosphate and glycerone phosphate from D-glucose: step 2/4. In terms of biological role, catalyzes the reversible isomerization of glucose-6-phosphate to fructose-6-phosphate. The polypeptide is Glucose-6-phosphate isomerase (Bartonella henselae (strain ATCC 49882 / DSM 28221 / CCUG 30454 / Houston 1) (Rochalimaea henselae)).